We begin with the raw amino-acid sequence, 540 residues long: Signal peptide peptidase-like 3 (540 aa).

Positions 1 to 28 (MSSFDPPNHRYSALVLILLLLGFSVAAA) are cleaved as a signal peptide. At 29–194 (DDVSWTEDSS…LYAPKRPAVD (166 aa)) the chain is on the lumenal side. In terms of domain architecture, PA spans 98 to 172 (SHLSSRLDGH…ISKSSGDALN (75 aa)). Residues asparagine 155 and asparagine 172 are each glycosylated (N-linked (GlcNAc...) asparagine). A helical membrane pass occupies residues 195–215 (LTAGLLLLMAVGTVVVASLWS). Over 216–250 (ELTDPDQANESYSILAKDVSSAGTRKDDPEKEILD) the chain is Cytoplasmic. A helical transmembrane segment spans residues 251–273 (ISVTGAVFFIVTASIFLLLLFYF). At 274–276 (MSS) the chain is on the lumenal side. The helical transmembrane segment at 277-299 (WFVWVLTIFFCIGGMQGMHNIIM) threads the bilayer. Residues 300–321 (AVILRKCRHLARKSVKLPLLGT) are Cytoplasmic-facing. Residues 322 to 342 (MSVLSLLVNIVCLAFAVFWFI) traverse the membrane as a helical segment. The Lumenal segment spans residues 343 to 347 (KRHTS). Residues 348 to 368 (YSWVGQDILGICLMITALQVV) traverse the membrane as a helical segment. The Cytoplasmic segment spans residues 369–377 (RLPNIKVAT). A helical membrane pass occupies residues 378–398 (VLLCCAFVYDIFWVFISPLIF). Aspartate 387 is a catalytic residue. Residues 399–429 (HESVMIVVAQGDSSTGESIPMLLRIPRFFDP) lie on the Lumenal side of the membrane. The chain crosses the membrane as a helical span at residues 430-450 (WGGYDMIGFGDILFPGLLISF). Residue aspartate 440 is part of the active site. The Cytoplasmic portion of the chain corresponds to 451–466 (ASRYDKIKKRVISNGY). Residues 467 to 487 (FLWLTIGYGIGLLLTYLGLYL) form a helical membrane-spanning segment. The Lumenal portion of the chain corresponds to 488–492 (MDGHG). A helical transmembrane segment spans residues 493–513 (QPALLYIVPCTLGLAVILGLV). The short motif at 494–496 (PAL) is the PAL element. Over 514 to 540 (RGELKELWNYGIEESESHTPEDPMPVA) the chain is Cytoplasmic.

Belongs to the peptidase A22B family. Glycosylated. Ubiquitous.

The protein resides in the endosome membrane. Functionally, intramembrane-cleaving aspartic protease (I-CLiP) that cleaves type II membrane signal peptides in the hydrophobic plane of the membrane. The protein is Signal peptide peptidase-like 3 (SPPL3) of Arabidopsis thaliana (Mouse-ear cress).